A 130-amino-acid chain; its full sequence is Small ribosomal subunit protein uS9 (130 aa).

It belongs to the universal ribosomal protein uS9 family.

The polypeptide is Small ribosomal subunit protein uS9 (Geobacillus sp. (strain WCH70)).